The following is a 214-amino-acid chain: Pyridoxine/pyridoxamine 5'-phosphate oxidase (214 aa).

Substrate-binding positions include 9-12 and Lys67; that span reads RKDY. Residues 62-67, 77-78, Arg83, Lys84, and Gln106 contribute to the FMN site; these read RMVLLK and FT. 3 residues coordinate substrate: Tyr124, Arg128, and Ser132. FMN contacts are provided by residues 141-142 and Trp186; that span reads QS. 192 to 194 is a substrate binding site; it reads RLH. Arg196 lines the FMN pocket.

It belongs to the pyridoxamine 5'-phosphate oxidase family. Homodimer. Requires FMN as cofactor.

It catalyses the reaction pyridoxamine 5'-phosphate + O2 + H2O = pyridoxal 5'-phosphate + H2O2 + NH4(+). The catalysed reaction is pyridoxine 5'-phosphate + O2 = pyridoxal 5'-phosphate + H2O2. It functions in the pathway cofactor metabolism; pyridoxal 5'-phosphate salvage; pyridoxal 5'-phosphate from pyridoxamine 5'-phosphate: step 1/1. It participates in cofactor metabolism; pyridoxal 5'-phosphate salvage; pyridoxal 5'-phosphate from pyridoxine 5'-phosphate: step 1/1. Functionally, catalyzes the oxidation of either pyridoxine 5'-phosphate (PNP) or pyridoxamine 5'-phosphate (PMP) into pyridoxal 5'-phosphate (PLP). This Nostoc sp. (strain PCC 7120 / SAG 25.82 / UTEX 2576) protein is Pyridoxine/pyridoxamine 5'-phosphate oxidase.